We begin with the raw amino-acid sequence, 135 residues long: Small ribosomal subunit protein bS6 (135 aa).

Lysine 93 is modified (N6-acetyllysine). The disordered stretch occupies residues 98 to 135; the sequence is EASPMVKAKDERRERRDDFANETADDAEAGDSEEEEEE. Residues 104–116 show a composition bias toward basic and acidic residues; the sequence is KAKDERRERRDDF. A compositionally biased stretch (acidic residues) spans 120-135; that stretch reads TADDAEAGDSEEEEEE.

Belongs to the bacterial ribosomal protein bS6 family. As to quaternary structure, part of the 30S ribosomal subunit. Interacts weakly with uL2 in one of the 3.5 A resolved structures. 5 different forms of the protein, varying only in the number of C-terminal glutamate residues, were isolated. The sequence shown is form bS6-6, which is the longest. The first two Glu are encoded by the rpsF gene, the other Glu are added post-translationally by the RimK enzyme.

In terms of biological role, binds together with bS18 to 16S ribosomal RNA. This chain is Small ribosomal subunit protein bS6 (rpsF), found in Escherichia coli (strain K12).